A 1072-amino-acid polypeptide reads, in one-letter code: DNA-directed RNA polymerase subunit beta (1072 aa).

It belongs to the RNA polymerase beta chain family. As to quaternary structure, in plastids the minimal PEP RNA polymerase catalytic core is composed of four subunits: alpha, beta, beta', and beta''. When a (nuclear-encoded) sigma factor is associated with the core the holoenzyme is formed, which can initiate transcription.

It is found in the plastid. The protein resides in the chloroplast. It catalyses the reaction RNA(n) + a ribonucleoside 5'-triphosphate = RNA(n+1) + diphosphate. In terms of biological role, DNA-dependent RNA polymerase catalyzes the transcription of DNA into RNA using the four ribonucleoside triphosphates as substrates. In Arabis hirsuta (Hairy rock-cress), this protein is DNA-directed RNA polymerase subunit beta.